We begin with the raw amino-acid sequence, 142 residues long: Hemoglobin subunit alpha (142 aa).

The Globin domain occupies 2-142 (VLSPADKSNV…VSTVLTSKYR (141 aa)). Serine 4 is modified (phosphoserine). Lysine 8 and lysine 12 each carry N6-succinyllysine. N6-acetyllysine; alternate is present on lysine 17. Lysine 17 is modified (N6-succinyllysine; alternate). The residue at position 25 (tyrosine 25) is a Phosphotyrosine. Residue serine 36 is modified to Phosphoserine. The residue at position 41 (lysine 41) is an N6-succinyllysine. Position 50 is a phosphoserine (serine 50). Residue histidine 59 coordinates O2. Histidine 88 is a binding site for heme b. At serine 103 the chain carries Phosphoserine. The residue at position 109 (threonine 109) is a Phosphothreonine. 2 positions are modified to phosphoserine: serine 125 and serine 132. A phosphothreonine mark is found at threonine 135 and threonine 138. Serine 139 bears the Phosphoserine mark.

It belongs to the globin family. Heterotetramer of two alpha chains and two beta chains. As to expression, red blood cells.

Functionally, involved in oxygen transport from the lung to the various peripheral tissues. Hemopressin acts as an antagonist peptide of the cannabinoid receptor CNR1. Hemopressin-binding efficiently blocks cannabinoid receptor CNR1 and subsequent signaling. This is Hemoglobin subunit alpha (HBA) from Ateles geoffroyi (Black-handed spider monkey).